Reading from the N-terminus, the 349-residue chain is Heat-inducible transcription repressor HrcA (349 aa).

This sequence belongs to the HrcA family.

In terms of biological role, negative regulator of class I heat shock genes (grpE-dnaK-dnaJ and groELS operons). Prevents heat-shock induction of these operons. The polypeptide is Heat-inducible transcription repressor HrcA (Xylella fastidiosa (strain 9a5c)).